Reading from the N-terminus, the 127-residue chain is Methylglyoxal synthase (127 aa).

Residues methionine 1 to aspartate 127 form the MGS-like domain. Substrate is bound by residues histidine 12, lysine 16, threonine 38 to threonine 41, and serine 59 to glycine 60. The active-site Proton donor/acceptor is aspartate 65. Substrate is bound at residue histidine 92.

This sequence belongs to the methylglyoxal synthase family.

The catalysed reaction is dihydroxyacetone phosphate = methylglyoxal + phosphate. In terms of biological role, catalyzes the formation of methylglyoxal from dihydroxyacetone phosphate. The polypeptide is Methylglyoxal synthase (Agrobacterium fabrum (strain C58 / ATCC 33970) (Agrobacterium tumefaciens (strain C58))).